An 886-amino-acid polypeptide reads, in one-letter code: Putative leucine-rich repeat receptor-like serine/threonine-protein kinase At2g14440 (886 aa).

A signal peptide spans 1–23 (METRSKLMLLACATFSIISLVKS). Residues 24-528 (QNQQGFISLY…KHQPKSWLVA (505 aa)) lie on the Extracellular side of the membrane. Residues Asn49, Asn69, Asn232, Asn236, Asn259, Asn292, Asn434, Asn447, Asn458, and Asn471 are each glycosylated (N-linked (GlcNAc...) asparagine). 4 LRR repeats span residues 413 to 436 (RIISLDLSSSGLTGVITPSIQNLT), 437 to 460 (MLRELDLSNNNLTGVIPPSLQNLT), 461 to 483 (MLRELDLSNNNLTGEVPEFLATI), and 485 to 507 (PLLVIHLRGNNLRGSVPQALQDR). Residues 529–549 (IVASISCVAVTIIVLVLIFIF) form a helical membrane-spanning segment. Over 550 to 886 (RRRKSSTRKV…TFISDIPSAR (337 aa)) the chain is Cytoplasmic. Residues 581–850 (NNFEVVLGKG…NMTRVAHELN (270 aa)) enclose the Protein kinase domain. ATP is bound by residues 587–595 (LGKGGFGVV) and Lys608. Tyr653 is subject to Phosphotyrosine. The Proton acceptor role is filled by Asp705. Ser739 is modified (phosphoserine). 2 positions are modified to phosphothreonine: Thr740 and Thr745. Tyr753 bears the Phosphotyrosine mark. Residues 863–886 (SQDQNSSKSSGHTVTFISDIPSAR) are disordered. Polar residues predominate over residues 865–878 (DQNSSKSSGHTVTF).

This sequence belongs to the protein kinase superfamily. Ser/Thr protein kinase family.

It localises to the cell membrane. It carries out the reaction L-seryl-[protein] + ATP = O-phospho-L-seryl-[protein] + ADP + H(+). It catalyses the reaction L-threonyl-[protein] + ATP = O-phospho-L-threonyl-[protein] + ADP + H(+). In Arabidopsis thaliana (Mouse-ear cress), this protein is Putative leucine-rich repeat receptor-like serine/threonine-protein kinase At2g14440.